Here is a 475-residue protein sequence, read N- to C-terminus: Glutamate--tRNA ligase (475 aa).

A 'HIGH' region motif is present at residues 11 to 21; the sequence is PSPTGFLHIGG. The short motif at 240-244 is the 'KMSKS' region element; the sequence is KLSKR. Residue K243 coordinates ATP.

This sequence belongs to the class-I aminoacyl-tRNA synthetase family. Glutamate--tRNA ligase type 1 subfamily. As to quaternary structure, monomer.

It localises to the cytoplasm. The catalysed reaction is tRNA(Glu) + L-glutamate + ATP = L-glutamyl-tRNA(Glu) + AMP + diphosphate. Its function is as follows. Catalyzes the attachment of glutamate to tRNA(Glu) in a two-step reaction: glutamate is first activated by ATP to form Glu-AMP and then transferred to the acceptor end of tRNA(Glu). This chain is Glutamate--tRNA ligase, found in Bradyrhizobium diazoefficiens (strain JCM 10833 / BCRC 13528 / IAM 13628 / NBRC 14792 / USDA 110).